The chain runs to 138 residues: Large ribosomal subunit protein mL54 (138 aa).

Residues 1–16 (MAARRLFGATGSWARW) constitute a mitochondrion transit peptide.

Belongs to the mitochondrion-specific ribosomal protein mL54 family. As to quaternary structure, component of the mitochondrial ribosome large subunit (39S) which comprises a 16S rRNA and about 50 distinct proteins.

The protein resides in the mitochondrion. This Bos taurus (Bovine) protein is Large ribosomal subunit protein mL54 (MRPL54).